The primary structure comprises 261 residues: Transmembrane protein 106A (261 aa).

Positions 1-10 (MGKAFSQLTS) are enriched in polar residues. The segment at 1 to 22 (MGKAFSQLTSQKDEDKSILPDN) is disordered. The helical transmembrane segment at 93 to 113 (LSVFLAVTICLLIFSLTIFFL) threads the bilayer.

The protein belongs to the TMEM106 family.

Its subcellular location is the cell membrane. Its function is as follows. Activates macrophages and polarizes them into M1-like macrophages through the activation of the MAPK and NF-kappaB signaling pathway. Upon activation, up-regulates the expression of CD80, CD86, CD69 and MHC II on macrophages, and induces the release of pro-inflammatory cytokines such as TNF, IL1B, IL6, CCL2 and nitric oxide. May play a role in inhibition of proliferation and migration. In Rattus norvegicus (Rat), this protein is Transmembrane protein 106A (Tmem106a).